The following is a 388-amino-acid chain: FMRFamide neuropeptides (388 aa).

Residues 1–21 (MVAPLLVFLFSLQLCHTTSWA) form the signal peptide. A propeptide spanning residues 22–172 (YVGGNSLNSN…SNHQVIRDSR (151 aa)) is cleaved from the precursor. Positions 40–74 (FPAGTSNEVPEDAANGQDDNDDSQLTEPNDNNAPL) are disordered. Polar residues predominate over residues 64–74 (LTEPNDNNAPL). Phenylalanine amide occurs at positions 179, 196, 208, 219, 230, 241, 253, 265, 277, 289, 301, 313, 325, 337, 346, 359, and 372. Residues 360 to 388 (GRTPTQSSDFMRFGKSLDKSENKTSDLQK) form a disordered region. The segment covering 374 to 388 (KSLDKSENKTSDLQK) has biased composition (basic and acidic residues). The propeptide occupies 375 to 388 (SLDKSENKTSDLQK).

This sequence belongs to the FARP (FMRFamide related peptide) family. As to expression, in the brain, expressed in 2 large cells in the lateral neurons in each optic lobe, 2 slightly bigger cells on both sides of the tritocerebrum, around 14 small cells in the dorsal area, around 13 cells in the subesophageal ganglion, and in the central brain.

It localises to the secreted. The sequence is that of FMRFamide neuropeptides from Musca domestica (House fly).